The sequence spans 214 residues: Cell division protein SepF (214 aa).

The tract at residues 25-51 is disordered; it reads EDDDRGARAGGYSRRPREDRFEEEAYG.

This sequence belongs to the SepF family. Homodimer. Interacts with FtsZ.

Its subcellular location is the cytoplasm. Cell division protein that is part of the divisome complex and is recruited early to the Z-ring. Probably stimulates Z-ring formation, perhaps through the cross-linking of FtsZ protofilaments. Its function overlaps with FtsA. The chain is Cell division protein SepF from Mycolicibacterium smegmatis (strain ATCC 700084 / mc(2)155) (Mycobacterium smegmatis).